Consider the following 416-residue polypeptide: Major facilitator superfamily domain-containing protein 3 (416 aa).

12 helical membrane-spanning segments follow: residues 10–30, 40–60, 68–88, 99–119, 139–158, 170–190, 204–224, 252–272, 295–315, 324–344, 365–385, and 392–412; these read GLYL…PILL, VGLT…APLV, VWLT…AVLP, TTVM…DVAL, QVVA…LVFF, LTAT…LGRL, YLLQ…FVLT, LWSG…GGAL, LGGL…GASL, AALL…TATF, FLAT…GVLA, and LCFA…RLAP.

This sequence belongs to the major facilitator superfamily.

It is found in the membrane. The sequence is that of Major facilitator superfamily domain-containing protein 3 (Mfsd3) from Rattus norvegicus (Rat).